The primary structure comprises 178 residues: uncharacterized protein (178 aa).

This is an uncharacterized protein from Rhizobium fredii (Sinorhizobium fredii).